We begin with the raw amino-acid sequence, 438 residues long: GDP-mannose 6-dehydrogenase (438 aa).

Residues Y10, V11, D30, K35, T86, and T124 each contribute to the NAD(+) site. E161, K210, N214, H217, N225, Y256, Y257, R259, F262, and G265 together coordinate GDP-alpha-D-mannuronate. C268 is an active-site residue. Residue K271 participates in NAD(+) binding. K324 is a binding site for GDP-alpha-D-mannuronate. R331 provides a ligand contact to NAD(+).

This sequence belongs to the UDP-glucose/GDP-mannose dehydrogenase family.

The catalysed reaction is GDP-alpha-D-mannose + 2 NAD(+) + H2O = GDP-alpha-D-mannuronate + 2 NADH + 3 H(+). It participates in glycan biosynthesis; alginate biosynthesis. Its function is as follows. Catalyzes the oxidation of guanosine diphospho-D-mannose (GDP-D-mannose) to GDP-D-mannuronic acid, a precursor for alginate polymerization. The alginate layer causes a mucoid phenotype and provides a protective barrier against host immune defenses and antibiotics. This chain is GDP-mannose 6-dehydrogenase (algD), found in Pseudomonas syringae pv. tomato (strain ATCC BAA-871 / DC3000).